Here is a 128-residue protein sequence, read N- to C-terminus: Protein yippee-like At3g08990 (128 aa).

The region spanning 12-109 (LVYSCKYCQT…LERFKVLGPY (98 aa)) is the Yippee domain. Zn(2+)-binding residues include Cys16, Cys19, Cys72, and Cys75.

The protein belongs to the yippee family.

The polypeptide is Protein yippee-like At3g08990 (Arabidopsis thaliana (Mouse-ear cress)).